The chain runs to 378 residues: MKFHIIYPKPNIVYTNMLSVTAGCRNCSFDYVSSLFKKYVNKYYNVVSNVEYSMSLSTRLVIADLWYVLENINALSVPSRAVLWLDTAWVWSNRTVPSNARNYLVLTTSQWNADILTKLGIDNAIVPRAIDDDYAVKYFNNIVVNNNDDDNVIDKKHGDGDSEVDGKFNVSGDSSDVTSNVVTTNVIGDVTDNKKYDVVAIMTGSSDGHKNEQLLLKILDALHLRKTSFLVCALPQCDAKPFSLTDDEKYELLSQSRLFAWLSESEGFGIPPVEAMSVGTPVVHFDSIYVNTPLVNAPIHFPLSVHGFKKRESPTVHGKYFASPVYNFDEIVSEFKDALSVATSLTVKDRIALHEYVMRNYSHKVILPELKKYMGGSF.

The protein belongs to the glycosyltransferase group 1 family. Glycosyltransferase 4 subfamily.

The protein is Putative glycosyltransferase ORF378 of Acidianus sp. F28 (AFV-2).